Consider the following 272-residue polypeptide: Activator of basal transcription 1 (272 aa).

At M1 the chain carries N-acetylmethionine. Positions 1 to 17 (MEAEESEKAATEQEPLK) are enriched in basic and acidic residues. Residues 1 to 38 (MEAEESEKAATEQEPLKGTEQTLDAEEEQEESEDAACG) are disordered. The segment covering 23–34 (LDAEEEQEESED) has biased composition (acidic residues). Residues 46–142 (GIVYLGHIPP…RRRSPFRYDL (97 aa)) enclose the RRM domain. A coiled-coil region spans residues 161 to 191 (AFERQVRRQRLRAEVAQAKRETDFYLQSVER). Residues 197–272 (AADGDPARPD…MEGPSLVRDS (76 aa)) are disordered.

This sequence belongs to the ESF2/ABP1 family. In terms of assembly, interacts with ESF1/ABTAP. Interacts with IGHMBP2.

It localises to the nucleus. The protein resides in the nucleolus. Its function is as follows. Could be a novel TATA-binding protein (TBP) which can function as a basal transcription activator. Can act as a regulator of basal transcription for class II genes. This is Activator of basal transcription 1 (ABT1) from Pongo abelii (Sumatran orangutan).